Here is a 362-residue protein sequence, read N- to C-terminus: Phospho-N-acetylmuramoyl-pentapeptide-transferase (362 aa).

10 helical membrane passes run 28–48, 72–92, 94–114, 131–151, 169–189, 200–220, 236–256, 264–284, 290–310, and 339–359; these read IISFLSALFISLGIGHCVITW, TPTMGGIVLILSIVISVMVCA, LSNIYVWYVFFILITYGILGL, VLHKYFWQSLIALTLVIIIFM, FMPQLGIWYIFLAYFVVVGTS, GLAIMPIMFVAAGLAVVAWIS, FSGELIIICSAIIGAGLGFLW, IFMGDVGSLSLGGTLGIIAVL, LLLIMGGMFVIETLSVILQVI, and IIVRFWIISLMLVFVGLITLK.

The protein belongs to the glycosyltransferase 4 family. MraY subfamily. Mg(2+) serves as cofactor.

Its subcellular location is the cell inner membrane. It carries out the reaction UDP-N-acetyl-alpha-D-muramoyl-L-alanyl-gamma-D-glutamyl-meso-2,6-diaminopimeloyl-D-alanyl-D-alanine + di-trans,octa-cis-undecaprenyl phosphate = di-trans,octa-cis-undecaprenyl diphospho-N-acetyl-alpha-D-muramoyl-L-alanyl-D-glutamyl-meso-2,6-diaminopimeloyl-D-alanyl-D-alanine + UMP. Its pathway is cell wall biogenesis; peptidoglycan biosynthesis. Catalyzes the initial step of the lipid cycle reactions in the biosynthesis of the cell wall peptidoglycan: transfers peptidoglycan precursor phospho-MurNAc-pentapeptide from UDP-MurNAc-pentapeptide onto the lipid carrier undecaprenyl phosphate, yielding undecaprenyl-pyrophosphoryl-MurNAc-pentapeptide, known as lipid I. The protein is Phospho-N-acetylmuramoyl-pentapeptide-transferase of Blochmanniella pennsylvanica (strain BPEN).